Reading from the N-terminus, the 329-residue chain is ATP phosphoribosyltransferase regulatory subunit (329 aa).

Belongs to the class-II aminoacyl-tRNA synthetase family. HisZ subfamily. In terms of assembly, heteromultimer composed of HisG and HisZ subunits.

The protein localises to the cytoplasm. The protein operates within amino-acid biosynthesis; L-histidine biosynthesis; L-histidine from 5-phospho-alpha-D-ribose 1-diphosphate: step 1/9. In terms of biological role, required for the first step of histidine biosynthesis. May allow the feedback regulation of ATP phosphoribosyltransferase activity by histidine. The polypeptide is ATP phosphoribosyltransferase regulatory subunit (Streptococcus gordonii (strain Challis / ATCC 35105 / BCRC 15272 / CH1 / DL1 / V288)).